The sequence spans 227 residues: uncharacterized protein (227 aa).

Residues 1–25 form the signal peptide; that stretch reads MLIMKKLLLIAATSATMLSSSVSFA.

This sequence to R.conorii RC1281.

This is an uncharacterized protein from Rickettsia conorii (strain ATCC VR-613 / Malish 7).